Reading from the N-terminus, the 157-residue chain is Universal stress protein Sll1654 (157 aa).

Belongs to the universal stress protein A family.

This chain is Universal stress protein Sll1654, found in Synechocystis sp. (strain ATCC 27184 / PCC 6803 / Kazusa).